Reading from the N-terminus, the 306-residue chain is MVSFTVSVPATTANIGPGFDCLGAALGLYNHVTVTDPTDPEVDLLIEARGRDGEKISTTKDNLLYQAIAYFYQQTGQAIPPLKLEIDLEIPLARGLGSSATAIVGGLLAANQAAGNPCTTSEILQMAIAMEGHPDNVAPALLGGCQLAVKNGDHWQLVALDWPSKFVPVLAIPNFELSTEAARAVLPHQYDRSAAIFNASHLALLVQAFSQGRGDWLALALQDQIHQPYRQSLIPAYDQLHQAALAAGAYNLVISGAGPTLLAIADEVRAPQIASTLVETWHDAGIEAESHCLPIDTKGATITKLR.

91–101 (PLARGLGSSAT) contacts ATP.

It belongs to the GHMP kinase family. Homoserine kinase subfamily.

The protein resides in the cytoplasm. It carries out the reaction L-homoserine + ATP = O-phospho-L-homoserine + ADP + H(+). It participates in amino-acid biosynthesis; L-threonine biosynthesis; L-threonine from L-aspartate: step 4/5. Functionally, catalyzes the ATP-dependent phosphorylation of L-homoserine to L-homoserine phosphate. This Synechocystis sp. (strain ATCC 27184 / PCC 6803 / Kazusa) protein is Homoserine kinase.